Reading from the N-terminus, the 368-residue chain is MNNKIALYCRSGFEKECAAEITTKAAQLEIFGFARVKENSGYVLFECYQLEDADRLIREVPFRELIFARQMMVVGELLKDLPPEDRVSPIVGMLTGVVEKAGELRVEVADTNESKELLKFCRKLTVPLRNAMREQKILSARENPHRPVVHVFFIASGCCYVGYSYSNNNSPFYMGIPRLKFPSDAPSRSTLKLEEAFHVFIPADEWEERLASGMHAVDLGACPGGWTYQLVQRSMMVQAIDNGLMAQSLMDTGQVTHHRVDGFKYEPTRSNIYWLVCDMVEKPAKVTQLIIKWLVNGWCREAIFNLKLPMKKRFEVVSENLEMIDEQLKENGINAHIQAKQLYHDREEVTVHVRRIWSGVPGRRDERF.

Residues Ser-189, 222-225, Asp-241, Asp-261, and Asp-278 each bind S-adenosyl-L-methionine; that span reads CPGG. Catalysis depends on Lys-307, which acts as the Proton acceptor.

Belongs to the class I-like SAM-binding methyltransferase superfamily. RNA methyltransferase RlmE family. RlmM subfamily. As to quaternary structure, monomer.

It localises to the cytoplasm. It catalyses the reaction cytidine(2498) in 23S rRNA + S-adenosyl-L-methionine = 2'-O-methylcytidine(2498) in 23S rRNA + S-adenosyl-L-homocysteine + H(+). Functionally, catalyzes the 2'-O-methylation at nucleotide C2498 in 23S rRNA. In Yersinia enterocolitica serotype O:8 / biotype 1B (strain NCTC 13174 / 8081), this protein is Ribosomal RNA large subunit methyltransferase M.